The primary structure comprises 466 residues: Methylenetetrahydrofolate--tRNA-(uracil-5-)-methyltransferase TrmFO (466 aa).

14 to 19 is a binding site for FAD; that stretch reads GGGLAG.

Belongs to the MnmG family. TrmFO subfamily. Requires FAD as cofactor.

The protein localises to the cytoplasm. It carries out the reaction uridine(54) in tRNA + (6R)-5,10-methylene-5,6,7,8-tetrahydrofolate + NADH + H(+) = 5-methyluridine(54) in tRNA + (6S)-5,6,7,8-tetrahydrofolate + NAD(+). The catalysed reaction is uridine(54) in tRNA + (6R)-5,10-methylene-5,6,7,8-tetrahydrofolate + NADPH + H(+) = 5-methyluridine(54) in tRNA + (6S)-5,6,7,8-tetrahydrofolate + NADP(+). Functionally, catalyzes the folate-dependent formation of 5-methyl-uridine at position 54 (M-5-U54) in all tRNAs. The sequence is that of Methylenetetrahydrofolate--tRNA-(uracil-5-)-methyltransferase TrmFO from Brucella melitensis biotype 1 (strain ATCC 23456 / CCUG 17765 / NCTC 10094 / 16M).